We begin with the raw amino-acid sequence, 204 residues long: Large ribosomal subunit protein uL13 (204 aa).

It belongs to the universal ribosomal protein uL13 family.

This is Large ribosomal subunit protein uL13 (RpL13A) from Spodoptera frugiperda (Fall armyworm).